Reading from the N-terminus, the 100-residue chain is MIPLQHGLLLAAILFVLGLTGLVIRRNLLFMLISLEIMINASALAFVVAGSYWGQSDGQVMYILAITLAAAEASIGLALLLQLYRRRQTLNIDTVSEMRG.

3 helical membrane-spanning segments follow: residues 4–24 (LQHG…GLVI), 28–48 (LLFM…AFVV), and 60–80 (VMYI…LALL).

Belongs to the complex I subunit 4L family. NDH-1 is composed of 13 different subunits. Subunits NuoA, H, J, K, L, M, N constitute the membrane sector of the complex.

The protein resides in the cell inner membrane. The enzyme catalyses a quinone + NADH + 5 H(+)(in) = a quinol + NAD(+) + 4 H(+)(out). In terms of biological role, NDH-1 shuttles electrons from NADH, via FMN and iron-sulfur (Fe-S) centers, to quinones in the respiratory chain. The immediate electron acceptor for the enzyme in this species is believed to be ubiquinone. Couples the redox reaction to proton translocation (for every two electrons transferred, four hydrogen ions are translocated across the cytoplasmic membrane), and thus conserves the redox energy in a proton gradient. This is NADH-quinone oxidoreductase subunit K from Musicola paradisiaca (strain Ech703) (Dickeya paradisiaca).